Here is a 639-residue protein sequence, read N- to C-terminus: Centromere protein T (639 aa).

Disordered regions lie at residues 1–64 (MDGR…RPNA), 266–294 (QLSDSKTSAQRSNTSYPAHEKARLEGLVS), 307–451 (SEKD…ERGT), 458–477 (AAEEEATDDESDKEDHESEE), and 494–534 (QPVL…TREP). Residues 12-23 (RAAPTPRVAVRS) show a composition bias toward low complexity. The segment at 80 to 500 (IIQNQPQVSP…YRPQPVLSPP (421 aa)) is flexible stalk domain. Over residues 267-281 (LSDSKTSAQRSNTSY) the composition is skewed to polar residues. 4 stretches are compositionally biased toward basic and acidic residues: residues 307 to 319 (SEKDLITDHEHVD), 329 to 338 (QGEEEQDHSQ), 356 to 371 (TEHHADAEYSEHSEKK), and 432 to 449 (PGAKPLKEAVEQTGEIER). Positions 458-469 (AAEEEATDDESD) are enriched in acidic residues.

The protein belongs to the CENP-T/CNN1 family. In terms of assembly, component of the CENPA-CAD complex, composed of CENPI, CENPK, CENPL, CENPO, CENPP, CENPQ, CENPR and CENPS. The CENPA-CAD complex is probably recruited on centromeres by the CENPA-NAC complex, at least composed of CENPA, CENPC, CENPH, CENPM, CENPN, CENPT and CENPU. Identified in a centromeric complex containing histones H2A, H2B, H3 and H4, and at least CENPA, CENPB, CENPC, CENPT, CENPN, HJURP, SUPT16H, SSRP1 and RSF1. Interacts (via N-terminus) with the NDC80 complex. Heterodimer with CENPW; this dimer coassembles with CENPS-CENPX heterodimers at centromeres to form the tetrameric CENP-T-W-S-X complex.

Its subcellular location is the nucleus. The protein resides in the chromosome. It is found in the centromere. The protein localises to the kinetochore. Its function is as follows. Component of the CENPA-NAC (nucleosome-associated) complex, a complex that plays a central role in assembly of kinetochore proteins, mitotic progression and chromosome segregation. The CENPA-NAC complex recruits the CENPA-CAD (nucleosome distal) complex and may be involved in incorporation of newly synthesized CENPA into centromeres. Part of a nucleosome-associated complex that binds specifically to histone H3-containing nucleosomes at the centromere, as opposed to nucleosomes containing CENPA. Component of the heterotetrameric CENP-T-W-S-X complex that binds and supercoils DNA, and plays an important role in kinetochore assembly. CENPT has a fundamental role in kinetochore assembly and function. It is one of the inner kinetochore proteins, with most further proteins binding downstream. Required for normal chromosome organization and normal progress through mitosis. This chain is Centromere protein T (CENPT), found in Gallus gallus (Chicken).